We begin with the raw amino-acid sequence, 457 residues long: UPF0328 protein ECU05_0030 (457 aa).

Disordered stretches follow at residues 1–112 and 157–183; these read MPRP…PTAT and VKSQ…NPRI. A compositionally biased stretch (basic and acidic residues) spans 74 to 94; sequence HTEGCHTHEANPEPNTKHTET. Over residues 102–112 the composition is skewed to pro residues; sequence CPPPHPGPTAT.

Belongs to the UPF0328 family.

The chain is UPF0328 protein ECU05_0030 from Encephalitozoon cuniculi (strain GB-M1) (Microsporidian parasite).